Consider the following 184-residue polypeptide: Gremlin-1 (184 aa).

Positions 1–24 (MSRTAYTVGALLLLLGTLLPAAEG) are cleaved as a signal peptide. Residues 24–77 (GKKKGSQGAIPPPDKAQHNDSEQTQSPQQPGSRNRGRGQGRGTAMPGEEVLESS) form a disordered region. Residue asparagine 42 is glycosylated (N-linked (GlcNAc...) asparagine). Disulfide bonds link cysteine 94-cysteine 144, cysteine 108-cysteine 158, cysteine 118-cysteine 176, and cysteine 122-cysteine 178. A CTCK domain is found at 94–184 (CKTQPLKQTI…QCRCISIDLD (91 aa)).

This sequence belongs to the DAN family. As to quaternary structure, homodimer; can also form homooligomers. Interacts with BMP2; can form higher oligomers with BMP2. Interacts with SLIT1 and SLIT2 in a glycosylation-dependent manner. In terms of tissue distribution, highly expressed in small intestine, fetal brain and colon. Expression is restricted to intestinal subepithelial myofibroblasts (ISEMFs) at the crypt base. In subjects with HMPS1, by contrast, GREM1 is expressed, not only in basal ISEMFs, but also at very high levels in epithelial cells (predominantly colonocytes), with expression extending most of the way up the sides of the crypt. Weakly expressed in brain, ovary, prostate, pancreas and skeletal muscle. In brain found in the region localized around the internal capsule in the large subcortical nuclei, including caudate, putamen, substantia nigra, thalamus and subthalamus. Predominantly expressed in normal cells including neurons, astrocytes and fibroblasts.

The protein resides in the secreted. Functionally, cytokine that may play an important role during carcinogenesis and metanephric kidney organogenesis, as a BMP antagonist required for early limb outgrowth and patterning in maintaining the FGF4-SHH feedback loop. Down-regulates the BMP4 signaling in a dose-dependent manner. Antagonist of BMP2; inhibits BMP2-mediated differentiation of osteoblasts (in vitro). Acts as inhibitor of monocyte chemotaxis. Can inhibit the growth or viability of normal cells but not transformed cells when is overexpressed. In Homo sapiens (Human), this protein is Gremlin-1 (GREM1).